We begin with the raw amino-acid sequence, 253 residues long: ER membrane protein complex subunit 3 (253 aa).

The next 3 membrane-spanning stretches (helical) occupy residues 10-30, 126-146, and 176-196; these read WVLL…QYIM, FIPQ…FILM, and SISW…LIGL.

The protein belongs to the EMC3 family. Component of the ER membrane protein complex (EMC), which is composed of EMC1, EMC2, EMC3, EMC4, EMC5 and EMC6.

It is found in the endoplasmic reticulum membrane. In terms of biological role, the EMC seems to be required for efficient folding of proteins in the endoplasmic reticulum (ER). This Saccharomyces cerevisiae (strain YJM789) (Baker's yeast) protein is ER membrane protein complex subunit 3 (AIM27).